Consider the following 175-residue polypeptide: Regenerating islet-derived protein 3-alpha (175 aa).

A signal peptide spans methionine 1–glycine 26. A propeptide spanning residues glutamate 27–arginine 37 is cleaved from the precursor. Cystine bridges form between cysteine 40-cysteine 51, cysteine 68-cysteine 171, and cysteine 146-cysteine 163. One can recognise a C-type lectin domain in the interval tyrosine 47–lysine 172. Residues histidine 50, histidine 107, glutamate 121, and histidine 145 each coordinate Zn(2+). The tract at residues tryptophan 103 to glycine 118 is sufficient to activate EXTL3.

Forms a hexameric membrane-permeabilizing oligomeric pore on membrane phospholipids. The hexamer is formed by three dimers related by helical symmetry. Forms filaments, filamentation traps pore complexes and limits damage to host cells. Interacts with EXTL3. In terms of processing, proteolytic processing by trypsin removes an inhibitory N-terminal propeptide and is essential for peptidoglycan binding and antibacterial activity. In terms of tissue distribution, small intestine and pancreas.

The protein localises to the secreted. Bactericidal C-type lectin. The lack of the EPN motif may explain its inability to bind peptidoglycan. Its function is as follows. Acts as a hormone in response to different stimuli like anti-inflammatory signals, such as IL17A, or gut microbiome. Secreted by different cell types to activate its receptor EXTL3 and induce cell specific signaling pathways. Induced by IL17A in keratinocytes, regulates keratinocyte proliferation and differentiation after skin injury via activation of EXTL3-PI3K-AKT signaling pathway. In parallel, inhibits skin inflammation through the inhibition of inflammatory cytokines such as IL6 and TNF. In pancreas, is able to permealize beta-cells membrane and stimulate their proliferation. The chain is Regenerating islet-derived protein 3-alpha (Reg3a) from Mus musculus (Mouse).